The following is a 400-amino-acid chain: Elongation factor Tu (400 aa).

Residues 10–209 enclose the tr-type G domain; that stretch reads KPHINIGTIG…AVDDYIPTPE (200 aa). The tract at residues 19-26 is G1; that stretch reads GHVDHGKT. GTP is bound at residue 19 to 26; it reads GHVDHGKT. Threonine 26 contacts Mg(2+). Positions 60–64 are G2; the sequence is GITIS. Positions 81 to 84 are G3; that stretch reads DCPG. Residues 81-85 and 136-139 each bind GTP; these read DCPGH and NKVD. A G4 region spans residues 136–139; sequence NKVD. The G5 stretch occupies residues 174–176; it reads SAK.

The protein belongs to the TRAFAC class translation factor GTPase superfamily. Classic translation factor GTPase family. EF-Tu/EF-1A subfamily. As to quaternary structure, monomer.

The protein resides in the cytoplasm. The enzyme catalyses GTP + H2O = GDP + phosphate + H(+). GTP hydrolase that promotes the GTP-dependent binding of aminoacyl-tRNA to the A-site of ribosomes during protein biosynthesis. The polypeptide is Elongation factor Tu (Herpetosiphon aurantiacus (Herpetosiphon giganteus)).